The following is a 276-amino-acid chain: Putative respiratory nitrate reductase heme subunit ORF7 (276 aa).

Residues M138 and K228 each contribute to the heme b site.

As to quaternary structure, probable multiprotein complex; a catalytic heterodimer of an alpha and beta chain is proposed to associate with additional subunits involved in membrane attachment and electron transfer. Heme b serves as cofactor.

It is found in the cell membrane. Functionally, the respiratory membrane-bound nitrate reductase enzyme complex plays a role in generation of metabolic energy by using nitrate as a terminal electron acceptor during anaerobic conditions. May transfer electrons to the iron-sulfur centers of the catalytic beta subunit. The protein is Putative respiratory nitrate reductase heme subunit ORF7 of Haloferax mediterranei (strain ATCC 33500 / DSM 1411 / JCM 8866 / NBRC 14739 / NCIMB 2177 / R-4) (Halobacterium mediterranei).